The primary structure comprises 339 residues: DNA-directed RNA polymerase subunit alpha (339 aa).

Positions Met1–Glu235 are alpha N-terminal domain (alpha-NTD). An alpha C-terminal domain (alpha-CTD) region spans residues Phe251–Tyr339.

It belongs to the RNA polymerase alpha chain family. Homodimer. The RNAP catalytic core consists of 2 alpha, 1 beta, 1 beta' and 1 omega subunit. When a sigma factor is associated with the core the holoenzyme is formed, which can initiate transcription.

It catalyses the reaction RNA(n) + a ribonucleoside 5'-triphosphate = RNA(n+1) + diphosphate. Functionally, DNA-dependent RNA polymerase catalyzes the transcription of DNA into RNA using the four ribonucleoside triphosphates as substrates. The sequence is that of DNA-directed RNA polymerase subunit alpha from Rhodopseudomonas palustris (strain BisB18).